The following is a 304-amino-acid chain: Putative S-adenosyl-L-methionine-dependent methyltransferase MAV_4444 (304 aa).

Residues Asp-130 and 159–160 (DL) each bind S-adenosyl-L-methionine.

Belongs to the UPF0677 family.

Exhibits S-adenosyl-L-methionine-dependent methyltransferase activity. The polypeptide is Putative S-adenosyl-L-methionine-dependent methyltransferase MAV_4444 (Mycobacterium avium (strain 104)).